A 429-amino-acid chain; its full sequence is Enolase (429 aa).

(2R)-2-phosphoglycerate is bound at residue Q165. E207 serves as the catalytic Proton donor. D244, E287, and D314 together coordinate Mg(2+). 4 residues coordinate (2R)-2-phosphoglycerate: K339, R368, S369, and K390. K339 functions as the Proton acceptor in the catalytic mechanism.

This sequence belongs to the enolase family. Mg(2+) serves as cofactor.

The protein resides in the cytoplasm. The protein localises to the secreted. It localises to the cell surface. It catalyses the reaction (2R)-2-phosphoglycerate = phosphoenolpyruvate + H2O. Its pathway is carbohydrate degradation; glycolysis; pyruvate from D-glyceraldehyde 3-phosphate: step 4/5. Its function is as follows. Catalyzes the reversible conversion of 2-phosphoglycerate (2-PG) into phosphoenolpyruvate (PEP). It is essential for the degradation of carbohydrates via glycolysis. The sequence is that of Enolase from Roseiflexus sp. (strain RS-1).